A 222-amino-acid polypeptide reads, in one-letter code: Leucyl/phenylalanyl-tRNA--protein transferase (222 aa).

Belongs to the L/F-transferase family.

It localises to the cytoplasm. It carries out the reaction N-terminal L-lysyl-[protein] + L-leucyl-tRNA(Leu) = N-terminal L-leucyl-L-lysyl-[protein] + tRNA(Leu) + H(+). The enzyme catalyses N-terminal L-arginyl-[protein] + L-leucyl-tRNA(Leu) = N-terminal L-leucyl-L-arginyl-[protein] + tRNA(Leu) + H(+). The catalysed reaction is L-phenylalanyl-tRNA(Phe) + an N-terminal L-alpha-aminoacyl-[protein] = an N-terminal L-phenylalanyl-L-alpha-aminoacyl-[protein] + tRNA(Phe). Functionally, functions in the N-end rule pathway of protein degradation where it conjugates Leu, Phe and, less efficiently, Met from aminoacyl-tRNAs to the N-termini of proteins containing an N-terminal arginine or lysine. The sequence is that of Leucyl/phenylalanyl-tRNA--protein transferase from Legionella pneumophila (strain Corby).